We begin with the raw amino-acid sequence, 348 residues long: UPF0324 membrane protein BPP3732 (348 aa).

The next 10 membrane-spanning stretches (helical) occupy residues 20 to 39, 43 to 62, 98 to 120, 135 to 157, 164 to 186, 196 to 215, 235 to 257, 267 to 286, 299 to 318, and 322 to 344; these read GILFVALMAAAVVQLADLPF, FGFSPLVVGIVCGMLYGNFL, IAAVGLPGLAVSVGVVASTLLIG, AMLTAAGSAICGAAAVLAFEPTL, SAVAVATVVLFGTLSMFLYPVIY, QALGIYIGGTVHEVAQVVGA, VALLVPVLLVLGFWLRASAAAGA, VPWFAIGFLVLAIVNSLDIL, VFVLTMAMTALGIETRFAQI, and GPRVMALGLVLYAWLVFGGYGIV.

It belongs to the UPF0324 family.

Its subcellular location is the cell membrane. The sequence is that of UPF0324 membrane protein BPP3732 from Bordetella parapertussis (strain 12822 / ATCC BAA-587 / NCTC 13253).